Reading from the N-terminus, the 967-residue chain is Transmembrane channel-like protein 5 (967 aa).

4 stretches are compositionally biased toward polar residues: residues 1–10, 21–31, 53–62, and 168–184; these read MSSFHQNSSY, GSRNHTHNYLE, NPHSSGSRTN, and QDNS…SNLP. The interval 1–240 is disordered; it reads MSSFHQNSSY…EEGDGYSSSK (240 aa). Residues 1-420 are Extracellular-facing; sequence MSSFHQNSSY…YFSFLRWLLK (420 aa). The helical transmembrane segment at 421–441 threads the bilayer; sequence FNIFSFVMNFSFIIIPQFTVG. Residues 442 to 449 lie on the Cytoplasmic side of the membrane; it reads AKNTLQFT. The helical transmembrane segment at 450 to 470 threads the bilayer; it reads GLEFFTGAGYFGDTVMYYGFY. The Extracellular portion of the chain corresponds to 471–487; that stretch reads TNSTIRHRMGGASYNMQ. Residues 488-508 form a helical membrane-spanning segment; the sequence is LAYIFTIGACLVVCFFSLLFS. Over 509-581 the chain is Cytoplasmic; sequence MAKYFRNNFI…NQQLTRFSAH (73 aa). The helical transmembrane segment at 582-602 threads the bilayer; the sequence is VAAWLVSTGVTAACCVAVYYL. Over 603 to 616 the chain is Extracellular; that stretch reads AEYNSEFLKTHRNP. The helical transmembrane segment at 617 to 637 threads the bilayer; that stretch reads GAVLLLPFVVSCINLAVPRFY. Residues 638-660 lie on the Cytoplasmic side of the membrane; that stretch reads SMFRLVERYEIPRQEVYVLLVRN. Residues 661–681 traverse the membrane as a helical segment; the sequence is IFLKISIVGILCYYWLNIVAL. The Extracellular segment spans residues 682-694; the sequence is SGEECWETLIGQD. The chain crosses the membrane as a helical span at residues 695-715; that stretch reads IYRLLLMDFVFSLADSLLGEF. Topologically, residues 716–749 are cytoplasmic; that stretch reads LRRLIGMKFTSLSLQEFDIARNVLELIYAQTLTW. A helical membrane pass occupies residues 750 to 770; that stretch reads LGIFFCPLLPFIQMITLFIMF. Over 771-796 the chain is Extracellular; sequence YVKNVSLMMNFQPPSKAWRASQMITF. Residues 797-817 traverse the membrane as a helical segment; the sequence is FIFLLFFPSFTGVLCTLAITI. Topologically, residues 818–861 are cytoplasmic; the sequence is WRLKPSADCGPFRGLPSFIQSIYSWIDTLSRRPGYLWVVWIYQN. The chain crosses the membrane as a helical span at residues 862–882; the sequence is LIGSVHFFFILTLIVLIITYL. The Extracellular portion of the chain corresponds to 883–967; the sequence is YWQITEGRKV…RSAQEENPIA (85 aa).

This sequence belongs to the TMC family. In terms of tissue distribution, ubiquitously expressed.

It is found in the membrane. Probable component of an ion channel. Molecular function hasn't been characterized yet. This chain is Transmembrane channel-like protein 5, found in Mus musculus (Mouse).